The sequence spans 84 residues: Probable cyclin-dependent kinases regulatory subunit (84 aa).

This sequence belongs to the CKS family. In terms of assembly, monomer in solution; may form a homohexamer that can probably bind six kinase subunits.

Functionally, binds to the catalytic subunit of the cyclin dependent kinases and is essential for their biological function. The polypeptide is Probable cyclin-dependent kinases regulatory subunit (Physarum polycephalum (Slime mold)).